Reading from the N-terminus, the 391-residue chain is Phosphoglycerate kinase (391 aa).

Residues 21–23 (DLN), Arg36, 59–62 (HLGR), Arg113, and Arg146 contribute to the substrate site. ATP contacts are provided by residues Lys197, Glu319, and 345 to 348 (GGDT).

This sequence belongs to the phosphoglycerate kinase family. In terms of assembly, monomer.

Its subcellular location is the cytoplasm. It catalyses the reaction (2R)-3-phosphoglycerate + ATP = (2R)-3-phospho-glyceroyl phosphate + ADP. Its pathway is carbohydrate degradation; glycolysis; pyruvate from D-glyceraldehyde 3-phosphate: step 2/5. This Xylella fastidiosa (strain 9a5c) protein is Phosphoglycerate kinase.